A 232-amino-acid chain; its full sequence is UPF0173 metal-dependent hydrolase Msil_0741 (232 aa).

This sequence belongs to the UPF0173 family.

This Methylocella silvestris (strain DSM 15510 / CIP 108128 / LMG 27833 / NCIMB 13906 / BL2) protein is UPF0173 metal-dependent hydrolase Msil_0741.